Reading from the N-terminus, the 76-residue chain is Small ribosomal subunit protein bS18 (76 aa).

Belongs to the bacterial ribosomal protein bS18 family. As to quaternary structure, part of the 30S ribosomal subunit. Forms a tight heterodimer with protein bS6.

In terms of biological role, binds as a heterodimer with protein bS6 to the central domain of the 16S rRNA, where it helps stabilize the platform of the 30S subunit. This Xylella fastidiosa (strain M23) protein is Small ribosomal subunit protein bS18.